Consider the following 106-residue polypeptide: Putative double-stranded DNA mimic protein VV1228 (106 aa).

This sequence belongs to the putative dsDNA mimic protein family.

May act as a double-stranded DNA (dsDNA) mimic. Probably regulates the activity of a dsDNA-binding protein. The protein is Putative double-stranded DNA mimic protein VV1228 of Vibrio vulnificus (strain YJ016).